The chain runs to 359 residues: Aromatic amino acid aminotransferase (359 aa).

Residues 1-42 are disordered; it reads MSERKPPYLRSALDSIPPYRPGRKVVGPDGRSAKLSSNESPF. The residue at position 223 (Lys-223) is an N6-(pyridoxal phosphate)lysine.

This sequence belongs to the class-II pyridoxal-phosphate-dependent aminotransferase family. In terms of assembly, homodimer. The cofactor is pyridoxal 5'-phosphate.

It carries out the reaction an aromatic L-alpha-amino acid + 2-oxoglutarate = an aromatic oxo-acid + L-glutamate. Aminotransferase that catalyzes the conversion of aromatic amino acids and 2-oxoglutarate into corresponding aromatic oxo acids and L-glutamate. The polypeptide is Aromatic amino acid aminotransferase (Thermobifida fusca (strain YX)).